Here is a 131-residue protein sequence, read N- to C-terminus: Maturin (131 aa).

Phosphotyrosine is present on tyrosine 34. Residues 107–120 show a composition bias toward acidic residues; it reads FEEYSADVEEEEPE. Positions 107 to 131 are disordered; the sequence is FEEYSADVEEEEPEADHPQMGVSQQ.

It belongs to the MTURN family. In terms of processing, phosphorylation at Tyr-34 is essential for its ability to promote megakaryocyte differentiation.

Its subcellular location is the cytoplasm. Promotes megakaryocyte differentiation by enhancing ERK and JNK signaling as well as up-regulating RUNX1 and FLI1 expression. Represses NF-kappa-B transcriptional activity by inhibiting phosphorylation of RELA at 'Ser- 536'. May be involved in early neuronal development. The polypeptide is Maturin (MTURN) (Bos taurus (Bovine)).